The chain runs to 304 residues: Recombination-associated protein RdgC (304 aa).

It belongs to the RdgC family.

It localises to the cytoplasm. It is found in the nucleoid. In terms of biological role, may be involved in recombination. This chain is Recombination-associated protein RdgC, found in Shewanella putrefaciens (strain CN-32 / ATCC BAA-453).